The sequence spans 196 residues: dITP/XTP pyrophosphatase (196 aa).

Substrate is bound at residue 7-12; the sequence is THNPGK. Mg(2+) is bound by residues Asp-40 and Asp-69. The Proton acceptor role is filled by Asp-69. Residues Ser-70, 150–153, Lys-173, and 178–179 each bind substrate; these read FGYD and HR.

The protein belongs to the HAM1 NTPase family. As to quaternary structure, homodimer. Mg(2+) is required as a cofactor.

The enzyme catalyses XTP + H2O = XMP + diphosphate + H(+). It catalyses the reaction dITP + H2O = dIMP + diphosphate + H(+). The catalysed reaction is ITP + H2O = IMP + diphosphate + H(+). Pyrophosphatase that catalyzes the hydrolysis of nucleoside triphosphates to their monophosphate derivatives, with a high preference for the non-canonical purine nucleotides XTP (xanthosine triphosphate), dITP (deoxyinosine triphosphate) and ITP. Seems to function as a house-cleaning enzyme that removes non-canonical purine nucleotides from the nucleotide pool, thus preventing their incorporation into DNA/RNA and avoiding chromosomal lesions. This is dITP/XTP pyrophosphatase from Exiguobacterium sp. (strain ATCC BAA-1283 / AT1b).